A 287-amino-acid chain; its full sequence is Aquaporin PIP2-1 (287 aa).

The residue at position 1 (Met-1) is an N-acetylmethionine. Residues 2–39 (AKDVEAVPGEGFQTRDYQDPPPAPFIDGAELKKWSFYR) are Cytoplasmic-facing. Lys-3 is modified (N6,N6-dimethyllysine; partial). Residues 40-60 (AVIAEFVATLLFLYITVLTVI) traverse the membrane as a helical segment. Over 61 to 83 (GYKIQSDTDAGGVDCGGVGILGI) the chain is Extracellular. A helical transmembrane segment spans residues 84-104 (AWAFGGMIFILVYCTAGISGG). Topologically, residues 105–125 (HINPAVTFGLFLARKVSLPRA) are cytoplasmic. The short motif at 107–109 (NPA) is the NPA 1 element. A helical transmembrane segment spans residues 126 to 146 (LLYIIAQCLGAICGVGFVKAF). Topologically, residues 147–167 (QSSYYTRYGGGANSLADGYST) are extracellular. The chain crosses the membrane as a helical span at residues 168–188 (GTGLAAEIIGTFVLVYTVFSA). The Cytoplasmic portion of the chain corresponds to 189–201 (TDPKRSARDSHVP). The helical transmembrane segment at 202–222 (VLAPLPIGFAVFMVHLATIPI) threads the bilayer. Topologically, residues 223-249 (TGTGINPARSFGAAVIYNKSKPWDDHW) are extracellular. Residues 228-230 (NPA) carry the NPA 2 motif. A helical membrane pass occupies residues 250–270 (IFWVGPFIGAAIAAFYHQFVL). The Cytoplasmic portion of the chain corresponds to 271–287 (RASGSKSLGSFRSAANV). Ser-280 and Ser-283 each carry phosphoserine.

Belongs to the MIP/aquaporin (TC 1.A.8) family. PIP (TC 1.A.8.11) subfamily. Post-translationally, ubiquitinated by RMA1, leading to proteasomal degradation. The phosphorylation at Ser-280 and Ser-283 is altered by salt (NaCl) and hydrogen peroxide H(2)O(2) treatments. Phosphorylation of Ser-283 is required for plasma membrane targeting. As to expression, predominantly expressed in roots and green siliques. Also expressed at lower level above ground and in flower buds.

The protein resides in the cell membrane. Its function is as follows. Water channel required to facilitate the transport of water across cell membrane. Probably involved in root water uptake. Its function is impaired by Hg(2+). This is Aquaporin PIP2-1 (PIP2-1) from Arabidopsis thaliana (Mouse-ear cress).